Here is a 340-residue protein sequence, read N- to C-terminus: Phosphoribosylformylglycinamidine cyclo-ligase (340 aa).

Belongs to the AIR synthase family.

Its subcellular location is the cytoplasm. It carries out the reaction 2-formamido-N(1)-(5-O-phospho-beta-D-ribosyl)acetamidine + ATP = 5-amino-1-(5-phospho-beta-D-ribosyl)imidazole + ADP + phosphate + H(+). It participates in purine metabolism; IMP biosynthesis via de novo pathway; 5-amino-1-(5-phospho-D-ribosyl)imidazole from N(2)-formyl-N(1)-(5-phospho-D-ribosyl)glycinamide: step 2/2. In Streptococcus pyogenes serotype M6 (strain ATCC BAA-946 / MGAS10394), this protein is Phosphoribosylformylglycinamidine cyclo-ligase.